Here is a 403-residue protein sequence, read N- to C-terminus: G-protein coupled receptor family C group 5 member B (403 aa).

Residues 1–28 (MFVASERKMRAHQVLTFLLLFVITSVAS) form the signal peptide. Over 29 to 56 (ENASTSRGCGLDLLPQYVSLCDLDAIWG) the chain is Extracellular. N30 is a glycosylation site (N-linked (GlcNAc...) asparagine). The chain crosses the membrane as a helical span at residues 57-77 (IVVEAVAGAGALITLLLMLIL). Residues 78–94 (LVRLPFIKEKEKKSPVG) are Cytoplasmic-facing. A helical membrane pass occupies residues 95-115 (LHFLFLLGTLGLFGLTFAFII). The Extracellular portion of the chain corresponds to 116–126 (QEDETICSVRR). A helical transmembrane segment spans residues 127–147 (FLWGVLFALCFSCLLSQAWRV). Residues 148–162 (RRLVRHGTGPAGWQL) are Cytoplasmic-facing. The chain crosses the membrane as a helical span at residues 163 to 183 (VGLALCLMLVQVIIAVEWLVL). Residues 184–199 (TVLRDTRPACAYEPMD) lie on the Extracellular side of the membrane. The helical transmembrane segment at 200-220 (FVMALIYDMVLLVVTLGLALF) threads the bilayer. Over 221 to 234 (TLCGKFKRWKLNGA) the chain is Cytoplasmic. The helical transmembrane segment at 235-255 (FLLITAFLSVLIWVAWMTMYL) threads the bilayer. Residues 256–271 (FGNVKLQQGDAWNDPT) are Extracellular-facing. A helical membrane pass occupies residues 272–292 (LAITLAASGWVFVIFHAIPEI). The Cytoplasmic portion of the chain corresponds to 293 to 403 (HCTLLPALQE…PPSHTGRHLW (111 aa)). The disordered stretch occupies residues 349–371 (GFPNGSLGKRPSGSLGKRPSAPF). S354 is modified (phosphoserine).

Belongs to the G-protein coupled receptor 3 family. In terms of tissue distribution, expression is high in kidney, pancreas, and testis, medium in brain, heart, prostate, small intestine, and spleen, low in liver, placenta, skeletal muscle, colon, ovary, and thymus, and not detectable in lung and peripheral leukocyte. According to PubMed:10945465, highly expressed in most brain areas examined, with the highest levels observed in corpus callosum, caudate nucleus, putamen, substantia nigra, thalamus, hippocampus, and spinal cord as well as in dorsal root ganglia (DRG). Expressed in glia limitans, ependymal cells, astrocyte cell bodies, the perivascular region in astrocyte endfeet, but not in neurons. In the periphery, expression levels are relatively low, compared to the CNS, with the strongest expression detected in pancreas, testis, uterus, and stomach.

The protein resides in the cell membrane. Its subcellular location is the cytoplasmic vesicle membrane. Functionally, G-protein coupled receptor involved in the regulation of cell volume. This is G-protein coupled receptor family C group 5 member B (GPRC5B) from Homo sapiens (Human).